Here is a 425-residue protein sequence, read N- to C-terminus: Orexin/Hypocretin receptor type 1 (425 aa).

Positions 1–24 (MEPSATPGAQMGVPPGSREPSPVP) are disordered. Over 1–46 (MEPSATPGAQMGVPPGSREPSPVPPDYEDEFLRYLWRDYLYPKQYE) the chain is Extracellular. The segment at 26 to 41 (DYEDEFLRYLWRDYLY) is required for response to orexin-A. Residues 47–67 (WVLIAAYVAVFVVALVGNTLV) traverse the membrane as a helical segment. Over 68–82 (CLAVWRNHHMRTVTN) the chain is Cytoplasmic. A helical membrane pass occupies residues 83-105 (YFIVNLSLADVLVTAICLPASLL). At 106 to 119 (VDITESWLFGHALC) the chain is on the extracellular side. Cysteine 119 and cysteine 202 are joined by a disulfide. A helical membrane pass occupies residues 120 to 140 (KVIPYLQAVSVSVAVLTLSFI). Topologically, residues 141-160 (ALDRWYAICHPLLFKSTARR) are cytoplasmic. Residues 161–182 (ARGSILGIWAVSLAIMVPQAAV) traverse the membrane as a helical segment. Over 183-213 (MECSSVLPELANRTRLFSVCDERWADDLYPK) the chain is Extracellular. Asparagine 194 is a glycosylation site (N-linked (GlcNAc...) asparagine). The chain crosses the membrane as a helical span at residues 214-235 (IYHSCFFIVTYLAPLGLMAMAY). The Cytoplasmic segment spans residues 236 to 298 (FQIFRKLWGR…QMRARRKTAK (63 aa)). A helical transmembrane segment spans residues 299–321 (MLMVVLLVFALCYLPISVLNVLK). A suvorexant-binding site is contributed by asparagine 318. Residues 322–336 (RVFGMFRQASDREAV) are Extracellular-facing. The helical transmembrane segment at 337 to 360 (YACFTFSHWLVYANSAANPIIYNF) threads the bilayer. Residues 361–425 (LSGKFREQFK…VLTSVTTVLP (65 aa)) lie on the Cytoplasmic side of the membrane.

It belongs to the G-protein coupled receptor 1 family.

It is found in the cell membrane. Functionally, moderately selective excitatory receptor for orexin-A and, with a lower affinity, for orexin-B neuropeptide. Triggers an increase in cytoplasmic Ca(2+) levels in response to orexin-A binding. The protein is Orexin/Hypocretin receptor type 1 of Homo sapiens (Human).